Reading from the N-terminus, the 187-residue chain is UPF0301 protein GOX1459 (187 aa).

It belongs to the UPF0301 (AlgH) family.

The chain is UPF0301 protein GOX1459 from Gluconobacter oxydans (strain 621H) (Gluconobacter suboxydans).